We begin with the raw amino-acid sequence, 89 residues long: Acylphosphatase (89 aa).

Residues 3–89 form the Acylphosphatase-like domain; the sequence is RKEFLVSGRV…DTREKRFSTY (87 aa). Active-site residues include R18 and N36.

Belongs to the acylphosphatase family.

It catalyses the reaction an acyl phosphate + H2O = a carboxylate + phosphate + H(+). This chain is Acylphosphatase (acyP), found in Clostridium perfringens (strain ATCC 13124 / DSM 756 / JCM 1290 / NCIMB 6125 / NCTC 8237 / Type A).